The chain runs to 3907 residues: A-kinase anchor protein 9 (3907 aa).

The span at 1–14 shows a compositional bias: basic and acidic residues; sequence MEDEERQKKLEAGK. The segment at 1–57 is disordered; the sequence is MEDEERQKKLEAGKAKLAQFRQRKAQSDGQSPSKKQKKKRKTSSSKHDVSAHHDLNI. Residues 34–44 show a composition bias toward basic residues; sequence KKQKKKRKTSS. Positions 45-56 are enriched in basic and acidic residues; sequence SKHDVSAHHDLN. Coiled coils occupy residues 152–902, 932–1010, 1088–1173, 1241–1268, 1324–1380, 1422–1447, and 1573–1647; these read DSPT…ELHL, EVVE…ENVQ, QPSE…QTMK, ELQD…EEYN, KLSS…ESTV, VKEE…VAKV, and SMDA…DNEN. Ser-153 bears the Phosphoserine mark. Ser-1327 is modified (phosphoserine). The span at 1682 to 1692 shows a compositional bias: low complexity; it reads STQTQNGNENQ. The interval 1682–1713 is disordered; that stretch reads STQTQNGNENQGEVEEQTFKEKELDRKPEDVP. Over residues 1698–1711 the composition is skewed to basic and acidic residues; sequence QTFKEKELDRKPED. Ser-1765 is subject to Phosphoserine. Coiled coils occupy residues 1845–2443, 2532–2549, 2591–2764, 3061–3088, 3120–3466, and 3583–3685; these read NISS…VEKI, ETEM…IVEE, QLRE…SKKA, LNCL…ADRR, ELLE…NLNE, and SLTE…NDSL. Residues 2542–2555 are PKA-RII subunit binding domain; the sequence is NLQKIVEEKVAAAL. Residues 3377–3405 are disordered; it reads RQQMEKDRQVHRKTLQTEQEANTEGQKKM. Phosphoserine occurs at positions 3690, 3842, 3865, and 3897.

In terms of assembly, interacts with the regulatory region of protein kinase N (PKN), protein phosphatase 2A (PP2A), protein phosphatase 1 (PP1) and the immature non-phosphorylated form of PKC epsilon. Interacts with CIP4 and FNBP1. Interacts with chloride intracellular channel proteins CLIC1, CLIC4 and CLIC5. CSNK1D binding promotes its centrosomal subcellular location. Interacts with GM130/GOLGA2; leading to recruitment to the Golgi apparatus. Interacts with KCNQ1; targets protein kinase A (PKA) catalytic and regulatory subunits and protein phosphatase 1 (PP1), to the heterodimer KCNQ1-KCNE1. Interacts with PDE4DIP isoform 13/MMG8/SMYLE; this interaction stabilizes both proteins. In complex with PDE4DIP isoform 13, recruits CAMSAP2 to the Golgi apparatus. Forms a pericentrosomal complex with CDK5RAP2, EB1/MAPRE1 and PDE4DIP isoform 13; within this complex, MAPRE1 binding to CDK5RAP2 may be mediated by PDE4DIP. Interacts with MAPRE1 and MAPRE3. Interacts (via C-terminus) with CAMSAP2; this interaction is much stronger in the presence of PDE4DIP isoform 13/MMG8/SMYLE. Interacts with CAMSAP3. Interacts (via C-terminus) with the gamma-tubulin ring complex (gamma-TuRC), composed of gamma-tubulin, TUBGCP2, TUBGCP3, TUBGCP4, TUBGCP5 and TUBGCP6. In terms of tissue distribution, widely expressed. Isoform 4: Highly expressed in skeletal muscle and in pancreas.

The protein resides in the golgi apparatus. The protein localises to the cytoplasm. It is found in the cytoskeleton. It localises to the microtubule organizing center. Its subcellular location is the centrosome. Its function is as follows. Scaffolding protein that assembles several protein kinases and phosphatases on the centrosome and Golgi apparatus. Required to maintain the integrity of the Golgi apparatus. Required for microtubule nucleation at the cis-side of the Golgi apparatus. Required for association of the centrosomes with the poles of the bipolar mitotic spindle during metaphase. In complex with PDE4DIP isoform 13/MMG8/SMYLE, recruits CAMSAP2 to the Golgi apparatus and tethers non-centrosomal minus-end microtubules to the Golgi, an important step for polarized cell movement. In complex with PDE4DIP isoform 13/MMG8/SMYLE, EB1/MAPRE1 and CDK5RAP2, contributes to microtubules nucleation and extension also from the centrosome to the cell periphery. In terms of biological role, associated with the N-methyl-D-aspartate receptor and is specifically found in the neuromuscular junction (NMJ) as well as in neuronal synapses, suggesting a role in the organization of postsynaptic specializations. In Homo sapiens (Human), this protein is A-kinase anchor protein 9 (AKAP9).